A 704-amino-acid chain; its full sequence is MADTGLRRVVPSDLYPLVLGFLRDNQLSEVASKFAKATGATQQDANASSLLDIYSFWLKSTKAPKVKLQSNGPVAKKAKKETSSSDSSEDSSEEEDKAQVPTQKAAAPAKRASLPQHAGKAAAKASESSSSEESSEEEEEEDKKKKPVQQKAVKPQAKAVRPPPKKAESSESESDSSSEDEAPQTQKPKAAATAAKAPTKAQTKAPAKPGPPAKAQPKAANGKAGSSSSSSSSSSSDDSEEEKKAAAPLKKTAPKKQVVAKAPVKVTAAPTQKSSSSEDSSSEEEEEQKKPMKKKAGPYSSVPPPSVSLSKKSVGAQSPKKAAAQTQPADSSADSSEESDSSSEEEKKTPAKTVVSKTPAKPAPVKKKAESSSDSSDSDSSEDEAPAKPVSATKSPLSKPAVTPKPPAAKAVATPKQPAGSGQKPQSRKADSSSSEEESSSSEEEATKKSVTTPKARVTAKAAPSLPAKQAPRAGGDSSSDSESSSSEEEKKTPPKPPAKKKAAGAAVPKPTPVKKAAAESSSSSSSSEDSSEEEKKKPKSKATPKPQAGKANGVPASQNGKAGKESEEEEEDTEQNKKAAGTKPGSGKKRKHNETADEAATPQSKKVKLQTPNTFPKRKKGEKRASSPFRRVREEEIEVDSRVADNSFDAKRGAAGDWGERANQVLKFTKGKSFRHEKTKKKRGSYRGGSISVQVNSVKFDSE.

Residues 10–42 (VPSDLYPLVLGFLRDNQLSEVASKFAKATGATQ) form the LisH domain. An N6-acetyllysine modification is found at K33. The interval 65–638 (KVKLQSNGPV…PFRRVREEEI (574 aa)) is disordered. Glycyl lysine isopeptide (Lys-Gly) (interchain with G-Cter in SUMO2) cross-links involve residues K67 and K76. Acidic serine cluster repeat units follow at residues 84–95 (SSDSSEDSSEEE) and 127–138 (ESSSSEESSEEE). The segment at 84 to 570 (SSDSSEDSSE…GKAGKESEEE (487 aa)) is 11 X 12 AA approximate repeats of an acidic serine cluster. A phosphoserine mark is found at S87, S88, S91, and S92. Residues 87 to 96 (SSEDSSEEED) show a composition bias toward acidic residues. S88 and S91 each carry diphosphoserine. 2 stretches are compositionally biased toward low complexity: residues 120-132 (KAAAKASESSSSE) and 149-160 (QQKAVKPQAKAV). Residues 170-181 (SESESDSSSEDE) form an Acidic serine cluster 3 repeat. Over residues 170 to 182 (SESESDSSSEDEA) the composition is skewed to acidic residues. 3 stretches are compositionally biased toward low complexity: residues 183 to 207 (PQTQKPKAAATAAKAPTKAQTKAPA), 215 to 236 (AQPKAANGKAGSSSSSSSSSSS), and 246 to 279 (AAPLKKTAPKKQVVAKAPVKVTAAPTQKSSSSED). Glycyl lysine isopeptide (Lys-Gly) (interchain with G-Cter in SUMO2) cross-links involve residues K189 and K200. 3 Acidic serine cluster repeats span residues 231–242 (SSSSSSDDSEEE), 274–285 (SSSSEDSSSEEE), and 335–346 (SSEESDSSSEEE). Residues K352 and K357 each participate in a glycyl lysine isopeptide (Lys-Gly) (interchain with G-Cter in SUMO2) cross-link. Residues S372, S373, and S376 each carry the phosphoserine modification. Residues 373–384 (SDSSDSDSSEDE) form an Acidic serine cluster 7 repeat. Glycyl lysine isopeptide (Lys-Gly) (interchain with G-Cter in SUMO2) cross-links involve residues K399, K405, K410, and K416. Residues 408-419 (AAKAVATPKQPA) show a composition bias toward low complexity. K424 is modified (N6-acetyllysine; alternate). K424 is covalently cross-linked (Glycyl lysine isopeptide (Lys-Gly) (interchain with G-Cter in SUMO1); alternate). A Glycyl lysine isopeptide (Lys-Gly) (interchain with G-Cter in SUMO2); alternate cross-link involves residue K424. Residues 434–444 (SSEEESSSSEE) show a composition bias toward acidic residues. One copy of the Acidic serine cluster 8 repeat lies at 434 to 445 (SSEEESSSSEEE). Residues K449 and K461 each participate in a glycyl lysine isopeptide (Lys-Gly) (interchain with G-Cter in SUMO2) cross-link. The residue at position 465 (S465) is a Phosphoserine. Composition is skewed to low complexity over residues 474 to 485 (AGGDSSSDSESS) and 504 to 529 (AGAAVPKPTPVKKAAAESSSSSSSSE). Residues 479–490 (SSDSESSSSEEE) form an Acidic serine cluster 9 repeat. K510 is covalently cross-linked (Glycyl lysine isopeptide (Lys-Gly) (interchain with G-Cter in SUMO2)). 2 Acidic serine cluster repeats span residues 524 to 535 (SSSSSEDSSEEE) and 559 to 570 (QNGKAGKESEEE). S567 is modified (phosphoserine). A Glycyl lysine isopeptide (Lys-Gly) (interchain with G-Cter in SUMO2) cross-link involves residue K584. Residue S587 is modified to Phosphoserine. Position 596 is a phosphothreonine (T596). K609 is covalently cross-linked (Glycyl lysine isopeptide (Lys-Gly) (interchain with G-Cter in SUMO2)). T612 and T615 each carry phosphothreonine. K618 participates in a covalent cross-link: Glycyl lysine isopeptide (Lys-Gly) (interchain with G-Cter in SUMO2). Phosphoserine is present on residues S627 and S648. K652 is covalently cross-linked (Glycyl lysine isopeptide (Lys-Gly) (interchain with G-Cter in SUMO2)). K668 is modified (N6-acetyllysine; alternate). K668 participates in a covalent cross-link: Glycyl lysine isopeptide (Lys-Gly) (interchain with G-Cter in SUMO2); alternate. Omega-N-methylarginine is present on R688. S691 bears the Phosphoserine mark. K700 is covalently cross-linked (Glycyl lysine isopeptide (Lys-Gly) (interchain with G-Cter in SUMO2)). Phosphoserine is present on S703.

The protein belongs to the NOLC1 family. In terms of assembly, interacts with RNA polymerase I 194 kDa subunit (RPA194) and with casein kinase-II. Interacts with DKC1/NAP57, NOP58 and fibrillarin. Post-translationally, undergoes rapid and massive phosphorylation/dephosphorylation cycles on CK2 and PKC sites. NOLC1 is one of the mostly phosphorylated proteins in the cell. In terms of processing, ubiquitinated. Monoubiquitination by the BCR(KBTBD8) complex promotes the formation of a NOLC1-TCOF1 complex that acts as a platform to connect RNA polymerase I with enzymes responsible for ribosomal processing and modification, leading to remodel the translational program of differentiating cells in favor of neural crest specification. Pyrophosphorylated by 5-diphosphoinositol pentakisphosphate (5-IP7). Serine pyrophosphorylation is achieved by Mg(2+)-dependent, but enzyme independent transfer of a beta-phosphate from a inositol pyrophosphate to a pre-phosphorylated serine residue.

It is found in the cytoplasm. Its subcellular location is the nucleus. It localises to the nucleolus. Nucleolar protein that acts as a regulator of RNA polymerase I by connecting RNA polymerase I with enzymes responsible for ribosomal processing and modification. Required for neural crest specification: following monoubiquitination by the BCR(KBTBD8) complex, associates with TCOF1 and acts as a platform to connect RNA polymerase I with enzymes responsible for ribosomal processing and modification, leading to remodel the translational program of differentiating cells in favor of neural crest specification. Involved in nucleologenesis, possibly by playing a role in the maintenance of the fundamental structure of the fibrillar center and dense fibrillar component in the nucleolus. It has intrinsic GTPase and ATPase activities. The polypeptide is Nucleolar and coiled-body phosphoprotein 1 (Rattus norvegicus (Rat)).